We begin with the raw amino-acid sequence, 321 residues long: Probable protein phosphatase methylesterase 1 (321 aa).

Active-site residues include S170, D195, and H307.

The protein belongs to the AB hydrolase superfamily.

The enzyme catalyses [phosphatase 2A protein]-C-terminal L-leucine methyl ester + H2O = [phosphatase 2A protein]-C-terminal L-leucine + methanol + H(+). Its function is as follows. Demethylates proteins that have been reversibly carboxymethylated. In Dictyostelium discoideum (Social amoeba), this protein is Probable protein phosphatase methylesterase 1 (ppme1).